The chain runs to 282 residues: Pantothenate synthetase (282 aa).

30-37 contributes to the ATP binding site; that stretch reads MGNLHDGH. The active-site Proton donor is the His37. (R)-pantoate is bound at residue Gln61. Gln61 is a binding site for beta-alanine. 149-152 contributes to the ATP binding site; it reads GNKD. Gln155 lines the (R)-pantoate pocket. Residues Ala178 and 186 to 189 contribute to the ATP site; that span reads MSSR.

This sequence belongs to the pantothenate synthetase family. As to quaternary structure, homodimer.

The protein localises to the cytoplasm. The catalysed reaction is (R)-pantoate + beta-alanine + ATP = (R)-pantothenate + AMP + diphosphate + H(+). It functions in the pathway cofactor biosynthesis; (R)-pantothenate biosynthesis; (R)-pantothenate from (R)-pantoate and beta-alanine: step 1/1. In terms of biological role, catalyzes the condensation of pantoate with beta-alanine in an ATP-dependent reaction via a pantoyl-adenylate intermediate. This Marinomonas sp. (strain MWYL1) protein is Pantothenate synthetase.